A 160-amino-acid chain; its full sequence is Dihydrofolate reductase (160 aa).

The region spanning 1 to 160 is the DHFR domain; the sequence is MVKAIWAMDQ…KVAYYHKIAR (160 aa). 5 to 7 lines the substrate pocket; the sequence is IWA. NADP(+) contacts are provided by residues 6–7 and 14–19; these read WA and IGNGNS. Substrate contacts are provided by Glu27 and Arg32. 43–46 lines the NADP(+) pocket; that stretch reads GSAT. A substrate-binding site is contributed by Arg57. NADP(+) contacts are provided by residues 62–65 and 101–106; these read LTRN and CGGAQV. Residue Ser120 coordinates substrate.

This sequence belongs to the dihydrofolate reductase family.

It carries out the reaction (6S)-5,6,7,8-tetrahydrofolate + NADP(+) = 7,8-dihydrofolate + NADPH + H(+). It participates in cofactor biosynthesis; tetrahydrofolate biosynthesis; 5,6,7,8-tetrahydrofolate from 7,8-dihydrofolate: step 1/1. Its function is as follows. Key enzyme in folate metabolism. Catalyzes an essential reaction for de novo glycine and purine synthesis, and for DNA precursor synthesis. The chain is Dihydrofolate reductase (folA) from Mycoplasma pneumoniae (strain ATCC 29342 / M129 / Subtype 1) (Mycoplasmoides pneumoniae).